A 97-amino-acid polypeptide reads, in one-letter code: Acylphosphatase (97 aa).

The Acylphosphatase-like domain occupies 7–97 (RLTAWVHGHV…QERFEGFVER (91 aa)). Active-site residues include Arg-22 and Asn-40.

It belongs to the acylphosphatase family.

The enzyme catalyses an acyl phosphate + H2O = a carboxylate + phosphate + H(+). In Mycobacterium avium (strain 104), this protein is Acylphosphatase (acyP).